Here is a 218-residue protein sequence, read N- to C-terminus: uncharacterized protein (218 aa).

This is an uncharacterized protein from Rickettsia prowazekii (strain Madrid E).